The primary structure comprises 177 residues: NADH-quinone oxidoreductase subunit E (177 aa).

Cysteine 93, cysteine 98, cysteine 134, and cysteine 138 together coordinate [2Fe-2S] cluster.

Belongs to the complex I 24 kDa subunit family. [2Fe-2S] cluster serves as cofactor.

The enzyme catalyses a quinone + NADH + 5 H(+)(in) = a quinol + NAD(+) + 4 H(+)(out). In terms of biological role, NDH-1 shuttles electrons from NADH, via FMN and iron-sulfur (Fe-S) centers, to quinones in the respiratory chain. Couples the redox reaction to proton translocation (for every two electrons transferred, four hydrogen ions are translocated across the cytoplasmic membrane), and thus conserves the redox energy in a proton gradient. The chain is NADH-quinone oxidoreductase subunit E (nuoE) from Rickettsia prowazekii (strain Madrid E).